Reading from the N-terminus, the 303-residue chain is Glycine--tRNA ligase alpha subunit (303 aa).

Belongs to the class-II aminoacyl-tRNA synthetase family. Tetramer of two alpha and two beta subunits.

It is found in the cytoplasm. The enzyme catalyses tRNA(Gly) + glycine + ATP = glycyl-tRNA(Gly) + AMP + diphosphate. In Streptococcus equi subsp. equi (strain 4047), this protein is Glycine--tRNA ligase alpha subunit.